The primary structure comprises 449 residues: Bifunctional protein GlmU (449 aa).

The pyrophosphorylase stretch occupies residues 1–226; sequence MVIVAVLAAG…YEEILGVNDR (226 aa). UDP-N-acetyl-alpha-D-glucosamine is bound by residues 7-10, K21, Q73, and 78-79; these read LAAG and GT. D103 contributes to the Mg(2+) binding site. UDP-N-acetyl-alpha-D-glucosamine is bound by residues G140, E155, N170, and N224. N224 lines the Mg(2+) pocket. Residues 227 to 247 are linker; the sequence is VQLAAAYQVLQNRIKKAWMQA. The tract at residues 248-449 is N-acetyltransferase; sequence GVTLIDPASI…VVKPNWEPEA (202 aa). The UDP-N-acetyl-alpha-D-glucosamine site is built by R329 and K347. Catalysis depends on H359, which acts as the Proton acceptor. UDP-N-acetyl-alpha-D-glucosamine-binding residues include Y362 and N373. Acetyl-CoA-binding positions include A376, 382–383, A419, and R436; that span reads NY.

It in the N-terminal section; belongs to the N-acetylglucosamine-1-phosphate uridyltransferase family. The protein in the C-terminal section; belongs to the transferase hexapeptide repeat family. As to quaternary structure, homotrimer. Requires Mg(2+) as cofactor.

It localises to the cytoplasm. The enzyme catalyses alpha-D-glucosamine 1-phosphate + acetyl-CoA = N-acetyl-alpha-D-glucosamine 1-phosphate + CoA + H(+). It carries out the reaction N-acetyl-alpha-D-glucosamine 1-phosphate + UTP + H(+) = UDP-N-acetyl-alpha-D-glucosamine + diphosphate. The protein operates within nucleotide-sugar biosynthesis; UDP-N-acetyl-alpha-D-glucosamine biosynthesis; N-acetyl-alpha-D-glucosamine 1-phosphate from alpha-D-glucosamine 6-phosphate (route II): step 2/2. It participates in nucleotide-sugar biosynthesis; UDP-N-acetyl-alpha-D-glucosamine biosynthesis; UDP-N-acetyl-alpha-D-glucosamine from N-acetyl-alpha-D-glucosamine 1-phosphate: step 1/1. Its pathway is bacterial outer membrane biogenesis; LPS lipid A biosynthesis. Functionally, catalyzes the last two sequential reactions in the de novo biosynthetic pathway for UDP-N-acetylglucosamine (UDP-GlcNAc). The C-terminal domain catalyzes the transfer of acetyl group from acetyl coenzyme A to glucosamine-1-phosphate (GlcN-1-P) to produce N-acetylglucosamine-1-phosphate (GlcNAc-1-P), which is converted into UDP-GlcNAc by the transfer of uridine 5-monophosphate (from uridine 5-triphosphate), a reaction catalyzed by the N-terminal domain. This Thermosynechococcus vestitus (strain NIES-2133 / IAM M-273 / BP-1) protein is Bifunctional protein GlmU.